The chain runs to 418 residues: Putative competence-damage inducible protein (418 aa).

It belongs to the CinA family.

The polypeptide is Putative competence-damage inducible protein (Streptococcus pneumoniae serotype 19F (strain G54)).